Consider the following 290-residue polypeptide: Thioredoxin-like protein 1 (290 aa).

One can recognise a Thioredoxin domain in the interval 24–104; it reads VDCYADWCGP…PQALKEKVAL (81 aa). A disulfide bridge connects residues Cys-31 and Cys-34. A PITH domain is found at 118–290; sequence SSSAPVKGFA…SKGKLQKVEA (173 aa).

It localises to the cytoplasm. It is found in the nucleus. In terms of biological role, has a role in cellular detoxification of alkyl hydroperoxide. The polypeptide is Thioredoxin-like protein 1 (txl1) (Schizosaccharomyces pombe (strain 972 / ATCC 24843) (Fission yeast)).